The sequence spans 100 residues: Elevenin (100 aa).

The N-terminal stretch at 1–24 (MALSQKALLVLVLSMLLTASDSWA) is a signal peptide. An intrachain disulfide couples C29 to C38. Residues 44-100 (KRGGDSLSVGGSAELDDTLTDPFLKSEEPKEWRELTRLSRVLQTFLSHPTGEMEQHD) constitute a propeptide that is removed on maturation.

The protein belongs to the elevenin family. As to quaternary structure, monomer. As to expression, expressed by the venom duct.

The protein resides in the secreted. In terms of biological role, may mimic the function of prey elevenin neuropeptide. In vivo, intracranial injection in mice induces hyperactivity. The sequence is that of Elevenin from Conus ammiralis (Admiral cone).